A 224-amino-acid polypeptide reads, in one-letter code: Inhibitor of apoptosis protein (224 aa).

A BIR repeat occupies 29-92; sequence VDARNQSFAI…AFWSRNCGFM (64 aa). Zn(2+) contacts are provided by C62, C65, H82, and C89.

The protein belongs to the asfivirus IAP family. As to quaternary structure, interacts with subunit p17 of host CASP3.

It localises to the host cytoplasm. It is found in the virion. Prevents apoptosis of host cell by inhibiting caspase-3/CASP3 activation to promote the viral replication. Also induces the activation of host NF-kappaB. The polypeptide is Inhibitor of apoptosis protein (p27) (African swine fever virus (isolate Tick/South Africa/Wildebeeslaagte M1/1996) (ASFV)).